The primary structure comprises 216 residues: Pyrrolidone-carboxylate peptidase (216 aa).

Active-site residues include Glu-80, Cys-143, and His-168.

This sequence belongs to the peptidase C15 family. Homotetramer.

Its subcellular location is the cytoplasm. It carries out the reaction Release of an N-terminal pyroglutamyl group from a polypeptide, the second amino acid generally not being Pro.. In terms of biological role, removes 5-oxoproline from various penultimate amino acid residues except L-proline. In Cupriavidus pinatubonensis (strain JMP 134 / LMG 1197) (Cupriavidus necator (strain JMP 134)), this protein is Pyrrolidone-carboxylate peptidase.